We begin with the raw amino-acid sequence, 552 residues long: HTH-type transcriptional regulator SgrR (552 aa).

In terms of domain architecture, HTH marR-type spans methionine 1–arginine 116. A DNA-binding region (H-T-H motif) is located at residues leucine 26–alanine 49. The tract at residues glutamate 163–tryptophan 493 is solute-binding.

Functionally, activates the small RNA gene sgrS under glucose-phosphate stress conditions as well as yfdZ. Represses its own transcription under both stress and non-stress conditions. Might act as a sensor of the intracellular accumulation of phosphoglucose by binding these molecules in its C-terminal solute-binding domain. The sequence is that of HTH-type transcriptional regulator SgrR from Salmonella typhimurium (strain LT2 / SGSC1412 / ATCC 700720).